Consider the following 186-residue polypeptide: Probable chorismate pyruvate-lyase (186 aa).

Residues Arg80, Leu118, and Glu170 each coordinate substrate.

Belongs to the UbiC family.

The protein localises to the cytoplasm. It catalyses the reaction chorismate = 4-hydroxybenzoate + pyruvate. The protein operates within cofactor biosynthesis; ubiquinone biosynthesis. In terms of biological role, removes the pyruvyl group from chorismate, with concomitant aromatization of the ring, to provide 4-hydroxybenzoate (4HB) for the ubiquinone pathway. The chain is Probable chorismate pyruvate-lyase from Pseudomonas syringae pv. syringae (strain B728a).